A 405-amino-acid polypeptide reads, in one-letter code: Nuclear hormone receptor family member nhr-199 (405 aa).

Residues 20–111 (IPYCLICSEV…MGMQRSSVQQ (92 aa)) constitute a DNA-binding region (nuclear receptor). 2 consecutive NR C4-type zinc fingers follow at residues 23 to 44 (CLIC…CRAC) and 60 to 94 (CGRN…CKAC). The 251-residue stretch at 126 to 376 (RGKPVLNKLR…PFSRIHGNQK (251 aa)) folds into the NR LBD domain.

This sequence belongs to the nuclear hormone receptor family.

It localises to the nucleus. Its function is as follows. Orphan nuclear receptor. This chain is Nuclear hormone receptor family member nhr-199 (nhr-199), found in Caenorhabditis elegans.